A 343-amino-acid chain; its full sequence is MNKPILRVLRGEALPVPPVWLMRQAGRYLPEYREVRAKAGSFLGLATHPEWAAEVTLQPIRRFGMDAAILFSDILMLPWALGYGLHFAEGEGPVLPKLEEADIDRLDFSQLIPRIAPIMETVTRVREQLQQLHPETTLIGFAGAPFTVSCYMVDGGGAKEFPRTRHFAYTNPEAFDRLIARLTEATITYLSAQVEAGAEVLMLFDSWAGLLSPLSFARWVTAPARQITAALKARHPSVPVIGFPRLAGTLLQNYASETGVNAVGMDTSVDPAMARKMVPAEIALQGNLDPLALRAGGEAMRREVSSIRQAMAGHPHIFNLGHGIVPQTPPEHVAELLNLIRTI.

Residues 23–27 (RQAGR), Asp73, Tyr151, Ser206, and His322 contribute to the substrate site.

This sequence belongs to the uroporphyrinogen decarboxylase family. In terms of assembly, homodimer.

It is found in the cytoplasm. The catalysed reaction is uroporphyrinogen III + 4 H(+) = coproporphyrinogen III + 4 CO2. It functions in the pathway porphyrin-containing compound metabolism; protoporphyrin-IX biosynthesis; coproporphyrinogen-III from 5-aminolevulinate: step 4/4. Catalyzes the decarboxylation of four acetate groups of uroporphyrinogen-III to yield coproporphyrinogen-III. The sequence is that of Uroporphyrinogen decarboxylase from Granulibacter bethesdensis (strain ATCC BAA-1260 / CGDNIH1).